We begin with the raw amino-acid sequence, 108 residues long: Parvalbumin beta (108 aa).

An N-acetylalanine modification is found at Ala-1. A disulfide bridge connects residues Cys-11 and Cys-33. EF-hand domains lie at 38-73 (KSAD…FKAG) and 77-108 (LTDA…LVKA). Ca(2+)-binding residues include Asp-51, Asp-53, Ser-55, Phe-57, Glu-59, Glu-62, Asp-90, Asp-92, Asp-94, Ala-96, and Glu-101.

It belongs to the parvalbumin family.

Functionally, in muscle, parvalbumin is thought to be involved in relaxation after contraction. It binds two calcium ions. The sequence is that of Parvalbumin beta from Merlangius merlangus (Whiting).